Reading from the N-terminus, the 336-residue chain is Phospho-N-acetylmuramoyl-pentapeptide-transferase (336 aa).

Transmembrane regions (helical) follow at residues 3–23 (LSIMAGVIAFVLTVIAIPRFI), 52–72 (MGGTVFLIVALLVSLIFSIIL), 79–99 (NLGATFGILSVVLIYGIIGFL), 123–143 (LIAGLIFYFVHVLPSGTSAIN), 144–164 (IFGFYLEVGYLYAFFVLFWVV), 175–195 (GIDGLASISVVISLITYGIIA), 201–221 (FDILLIIVIMIGALLGFFVFN), 227–247 (VFMGDVGSLALGAMLAAISIA), 255–275 (LFIGFVYVFETSSVMLQVAYF), and 315–335 (VDAFLWAIGIFMSAITLAILY).

The protein belongs to the glycosyltransferase 4 family. MraY subfamily. It depends on Mg(2+) as a cofactor.

The protein resides in the cell membrane. It catalyses the reaction UDP-N-acetyl-alpha-D-muramoyl-L-alanyl-gamma-D-glutamyl-L-lysyl-D-alanyl-D-alanine + di-trans,octa-cis-undecaprenyl phosphate = Mur2Ac(oyl-L-Ala-gamma-D-Glu-L-Lys-D-Ala-D-Ala)-di-trans,octa-cis-undecaprenyl diphosphate + UMP. The protein operates within cell wall biogenesis; peptidoglycan biosynthesis. In terms of biological role, catalyzes the initial step of the lipid cycle reactions in the biosynthesis of the cell wall peptidoglycan: transfers peptidoglycan precursor phospho-MurNAc-pentapeptide from UDP-MurNAc-pentapeptide onto the lipid carrier undecaprenyl phosphate, yielding undecaprenyl-pyrophosphoryl-MurNAc-pentapeptide, known as lipid I. The polypeptide is Phospho-N-acetylmuramoyl-pentapeptide-transferase (Streptococcus agalactiae serotype Ia (strain ATCC 27591 / A909 / CDC SS700)).